The following is a 234-amino-acid chain: Adenosine 5'-phosphosulfate reductase (234 aa).

Positions 120, 121, 203, and 206 each coordinate [4Fe-4S] cluster. The Nucleophile; cysteine thiosulfonate intermediate role is filled by cysteine 229.

It belongs to the PAPS reductase family. CysH subfamily. It depends on [4Fe-4S] cluster as a cofactor.

It is found in the cytoplasm. It carries out the reaction [thioredoxin]-disulfide + sulfite + AMP + 2 H(+) = adenosine 5'-phosphosulfate + [thioredoxin]-dithiol. Its pathway is sulfur metabolism; hydrogen sulfide biosynthesis; sulfite from sulfate. Catalyzes the formation of sulfite from adenosine 5'-phosphosulfate (APS) using thioredoxin as an electron donor. The polypeptide is Adenosine 5'-phosphosulfate reductase (Bacillus cereus (strain B4264)).